Here is a 435-residue protein sequence, read N- to C-terminus: Legumain (435 aa).

The signal sequence occupies residues 1 to 17 (MTWRVAVLLSLVLGAGA). A glycan (N-linked (GlcNAc...) asparagine) is linked at N93. H150 is a catalytic residue. N-linked (GlcNAc...) asparagine glycosylation occurs at N169. C191 serves as the catalytic Nucleophile. N265 and N274 each carry an N-linked (GlcNAc...) asparagine glycan. The propeptide occupies 326–435 (DVKESQNLIG…AMDKVCLSHY (110 aa)). 2 disulfide bridges follow: C380-C414 and C392-C431.

This sequence belongs to the peptidase C13 family. Homodimer before autocatalytic removal of the propeptide. Monomer after autocatalytic processing. May interact with integrins. Glycosylated. In terms of processing, activated by autocatalytic processing at pH 4. In terms of tissue distribution, detected in kidney proximal tubules (at protein level). Ubiquitous. Particularly abundant in kidney and placenta.

The protein resides in the lysosome. It carries out the reaction Hydrolysis of proteins and small molecule substrates at -Asn-|-Xaa- bonds.. With respect to regulation, inhibited by cystatin-C. In terms of biological role, has a strict specificity for hydrolysis of asparaginyl bonds. Can also cleave aspartyl bonds slowly, especially under acidic conditions. Involved in the processing of proteins for MHC class II antigen presentation in the lysosomal/endosomal system. Also involved in MHC class I antigen presentation in cross-presenting dendritic cells by mediating cleavage and maturation of Perforin-2 (MPEG1), thereby promoting antigen translocation in the cytosol. Required for normal lysosomal protein degradation in renal proximal tubules. Required for normal degradation of internalized EGFR. Plays a role in the regulation of cell proliferation via its role in EGFR degradation. The sequence is that of Legumain (Lgmn) from Mus musculus (Mouse).